Consider the following 166-residue polypeptide: Ribonuclease H (166 aa).

The RNase H type-1 domain maps to 10 to 151 (KRVRVDMFTD…ADELARRGTS (142 aa)). Mg(2+) contacts are provided by D19, E57, D79, and D143. Over residues 145–157 (LARRGTSEARQGK) the composition is skewed to basic and acidic residues. Residues 145-166 (LARRGTSEARQGKVDGQSSTIL) form a disordered region.

It belongs to the RNase H family. In terms of assembly, monomer. Mg(2+) serves as cofactor.

It is found in the cytoplasm. It catalyses the reaction Endonucleolytic cleavage to 5'-phosphomonoester.. Endonuclease that specifically degrades the RNA of RNA-DNA hybrids. The sequence is that of Ribonuclease H from Rhodospirillum rubrum (strain ATCC 11170 / ATH 1.1.1 / DSM 467 / LMG 4362 / NCIMB 8255 / S1).